Reading from the N-terminus, the 1069-residue chain is Receptor-type guanylate cyclase gcy-29 (1069 aa).

The signal sequence occupies residues 1–23; it reads MLPNFWNFQFIFVIFCWIPIVVS. At 24-458 the chain is on the extracellular side; sequence DEKIVLKIGS…FREENCDYTQ (435 aa). Asn-161, Asn-240, and Asn-407 each carry an N-linked (GlcNAc...) asparagine glycan. A helical membrane pass occupies residues 459–479; it reads TIVIATAVVCIILTVFLGIWL. Residues 480–1069 lie on the Cytoplasmic side of the membrane; that stretch reads RRACETSALD…FKKKNNTFDF (590 aa). The region spanning 497–806 is the Protein kinase domain; it reads RDDVQILDEE…RVRLATEIAL (310 aa). ATP is bound by residues 503 to 511 and Lys-527; that span reads LDEEQVKSV. Residues 876–1006 enclose the Guanylate cyclase domain; the sequence is TVMFSDIVGF…ETVNIAAVME (131 aa). Residues Asp-881, Ile-882, and Asp-925 each coordinate Mg(2+).

This sequence belongs to the adenylyl cyclase class-4/guanylyl cyclase family. In terms of tissue distribution, expressed bilaterally in ASE and AFD sensory neurons.

The protein localises to the cell membrane. It catalyses the reaction GTP = 3',5'-cyclic GMP + diphosphate. In terms of biological role, guanylate cyclase involved in the production of the second messenger cGMP. The sequence is that of Receptor-type guanylate cyclase gcy-29 from Caenorhabditis elegans.